A 217-amino-acid chain; its full sequence is Urease accessory protein UreG (217 aa).

The span at 1-18 (MNAPHHPAHSTVRTKKLP) shows a compositional bias: basic residues. The disordered stretch occupies residues 1–24 (MNAPHHPAHSTVRTKKLPPLRVGV). 26 to 33 (GPVGSGKT) contacts GTP.

The protein belongs to the SIMIBI class G3E GTPase family. UreG subfamily. Homodimer. UreD, UreF and UreG form a complex that acts as a GTP-hydrolysis-dependent molecular chaperone, activating the urease apoprotein by helping to assemble the nickel containing metallocenter of UreC. The UreE protein probably delivers the nickel.

The protein localises to the cytoplasm. Facilitates the functional incorporation of the urease nickel metallocenter. This process requires GTP hydrolysis, probably effectuated by UreG. This chain is Urease accessory protein UreG, found in Paraburkholderia xenovorans (strain LB400).